Consider the following 269-residue polypeptide: Tryptophan synthase alpha chain (269 aa).

Catalysis depends on proton acceptor residues Glu-49 and Asp-60.

Belongs to the TrpA family. Tetramer of two alpha and two beta chains.

It catalyses the reaction (1S,2R)-1-C-(indol-3-yl)glycerol 3-phosphate + L-serine = D-glyceraldehyde 3-phosphate + L-tryptophan + H2O. It functions in the pathway amino-acid biosynthesis; L-tryptophan biosynthesis; L-tryptophan from chorismate: step 5/5. Its function is as follows. The alpha subunit is responsible for the aldol cleavage of indoleglycerol phosphate to indole and glyceraldehyde 3-phosphate. The chain is Tryptophan synthase alpha chain from Proteus mirabilis (strain HI4320).